Reading from the N-terminus, the 404-residue chain is Cysteine desulfurase IscS (404 aa).

Pyridoxal 5'-phosphate is bound by residues 73–74 (AT), Asn-153, Gln-181, and 201–203 (SAH). Position 204 is an N6-(pyridoxal phosphate)lysine (Lys-204). Residue Thr-241 coordinates pyridoxal 5'-phosphate. The active-site Cysteine persulfide intermediate is the Cys-327. Cys-327 lines the [2Fe-2S] cluster pocket.

This sequence belongs to the class-V pyridoxal-phosphate-dependent aminotransferase family. NifS/IscS subfamily. As to quaternary structure, homodimer. Forms a heterotetramer with IscU, interacts with other sulfur acceptors. The cofactor is pyridoxal 5'-phosphate.

The protein localises to the cytoplasm. The enzyme catalyses (sulfur carrier)-H + L-cysteine = (sulfur carrier)-SH + L-alanine. The protein operates within cofactor biosynthesis; iron-sulfur cluster biosynthesis. Master enzyme that delivers sulfur to a number of partners involved in Fe-S cluster assembly, tRNA modification or cofactor biosynthesis. Catalyzes the removal of elemental sulfur atoms from cysteine to produce alanine. Functions as a sulfur delivery protein for Fe-S cluster synthesis onto IscU, an Fe-S scaffold assembly protein, as well as other S acceptor proteins. This is Cysteine desulfurase IscS from Anaeromyxobacter sp. (strain K).